A 224-amino-acid chain; its full sequence is MRSLLFSLTALVLAGCVQTPHKPMPDDPYYAPVLPEERAQPVVPTGSLFQDAYADNLYSDIKARRLGDIITVTLREQTTASKTATTETSKESTAELAAPTAFGRNITVGGNPLSAGINGTREFSGDGSSDQSNQLNGEITVTVIKVLPNGNLIVRGEKWMRINTGDEYIRLTGMIRPQDITAANQIPSTRVANARIEYSGTGSLAQVQEQGWLTRFFNSPIWPF.

The N-terminal stretch at 1 to 15 is a signal peptide; that stretch reads MRSLLFSLTALVLAG. Cys16 is lipidated: N-palmitoyl cysteine. The S-diacylglycerol cysteine moiety is linked to residue Cys16.

This sequence belongs to the FlgH family. In terms of assembly, the basal body constitutes a major portion of the flagellar organelle and consists of four rings (L,P,S, and M) mounted on a central rod.

Its subcellular location is the cell outer membrane. It localises to the bacterial flagellum basal body. Its function is as follows. Assembles around the rod to form the L-ring and probably protects the motor/basal body from shearing forces during rotation. This Idiomarina loihiensis (strain ATCC BAA-735 / DSM 15497 / L2-TR) protein is Flagellar L-ring protein.